We begin with the raw amino-acid sequence, 99 residues long: Small integral membrane protein 9 (99 aa).

Positions 1 to 26 (MEPQKLLIIGFLLCSLTCLLLETVAS) are cleaved as a signal peptide. At 27-73 (SPLPLSALGIQEKTGSKPRSGGNHRSWLNNFRDYLWQLIKSALPPAA) the chain is on the extracellular side. The chain crosses the membrane as a helical span at residues 74-94 (IVAFLLTSALMGILCCFTILV). At 95–99 (VDPVH) the chain is on the cytoplasmic side.

The protein resides in the cell membrane. The sequence is that of Small integral membrane protein 9 (SMIM9) from Homo sapiens (Human).